The primary structure comprises 390 residues: Cyclic amide hydrolase (390 aa).

The segment at 1–118 (MPNPEASLSP…TVVTQEWVAD (118 aa)) is RU A. Residues R66 and 97–98 (SG) each bind substrate. The RU B stretch occupies residues 127-268 (GLVVGRGHTE…GEVLLLANSA (142 aa)). Residue K177 is part of the active site. Substrate-binding positions include N213, 251–252 (SS), K346, and 365–366 (SG). S251 functions as the Nucleophile in the catalytic mechanism. Residues 274 to 390 (LRIGHGITRD…VAAVVRRLPA (117 aa)) form an RU C region.

It belongs to the cyclic amide hydrolase (CyAH) family. As to quaternary structure, homotetramer; disulfide-linked. The disulfide forms between 2 monomers in the tetramer, such that each tetramer contains 2 sets of vicinal disulfides.

Cyclic amide hydrolase of unknown substrate specificity. Catalyzes the hydrolytic ring-opening of a cyclic amide. Does not act on cyanuric acid nor barbituric acid. The chain is Cyclic amide hydrolase from Pseudofrankia inefficax (strain DSM 45817 / CECT 9037 / DDB 130130 / EuI1c) (Frankia inefficax).